The following is a 131-amino-acid chain: Large ribosomal subunit protein bL12 (131 aa).

The protein belongs to the bacterial ribosomal protein bL12 family. In terms of assembly, homodimer. Part of the ribosomal stalk of the 50S ribosomal subunit. Forms a multimeric L10(L12)X complex, where L10 forms an elongated spine to which 2 to 4 L12 dimers bind in a sequential fashion. Binds GTP-bound translation factors.

Forms part of the ribosomal stalk which helps the ribosome interact with GTP-bound translation factors. Is thus essential for accurate translation. This is Large ribosomal subunit protein bL12 from Prochlorococcus marinus subsp. pastoris (strain CCMP1986 / NIES-2087 / MED4).